The following is a 316-amino-acid chain: PAK4-inhibitor inka2 (316 aa).

Disordered regions lie at residues 43–74 (RSSPPPSPDIEKPCVVPPRRAPRRDNRISHRT) and 108–130 (YSEVSGGSLRGEEDDIVEEESET). A compositionally biased stretch (basic and acidic residues) spans 65 to 74 (RRDNRISHRT). The span at 119-129 (EEDDIVEEESE) shows a compositional bias: acidic residues. The inka box stretch occupies residues 182–219 (DSQDWTGCLLSQSRSRQPLVLGDNSFADLVKQWMDLPE).

The protein belongs to the INKA family.

It is found in the nucleus. Its function is as follows. Inhibitor of the serine/threonine-protein kinase pak4/pak5. Acts by binding pak4/pak5 in a substrate-like manner, inhibiting the protein kinase activity. The sequence is that of PAK4-inhibitor inka2 from Xenopus laevis (African clawed frog).